The chain runs to 228 residues: Sugar fermentation stimulation protein homolog (228 aa).

It belongs to the SfsA family.

The sequence is that of Sugar fermentation stimulation protein homolog from Desulfitobacterium hafniense (strain DSM 10664 / DCB-2).